A 589-amino-acid polypeptide reads, in one-letter code: MEEGRLHRVMLSCGYSFTYARNLPEKAILYSQNCQQGYYTKEYTTVAGDVKIALIIRADPFIELPIAYILELPEQFKDRLMPHISLEGFLCYVEQMEADWDSNNLEDTYREVDAQIQRTLVNSVSAAMEGSNDKKELEGEFTAYWRPSESLFVLSNANRSTRLKTFISQSVRPNGSSQVEYITVEESSPENSGKVISAWLKLRYLPKNSLKEYHISTHYISVNPSRVAGMKWPPASFRDLLSWLGKADHNAKNKVVEYIKKEGKKRYVFLFDVLKQDTFGIYVEFDLKSIDLKRYKHSAKNSTAKLSTVLGGKSVCSMYQRLGVVRADIETLLSRNTRREGSAKLSEKRIALVGCGTIGGYLAELLLRNGAGCGKGHLHLYDDDLYKPSNFGRHTLSAHDFGRYKSLSLARKLKDSVHLPTQIIGFEKQFSIRADLMQKYDIIIDATGRPPVSKRMASIVRTIALEKRPKIIHAFNDGNGRASKVFIDDGRSCYGCMVSNPEKYRNGIDSRFCHIDISREKNKNCGSTYTPYDAAVSNITASLTQMAVLSTLDPELKWTYSEHMLEGGRSLKSQFLPRQPNCPICNEYE.

Cysteine 13 participates in a covalent cross-link: Glycyl cysteine dithioester (Cys-Gly) (interchain with G-Cter in DncV). Lysine 77 participates in a covalent cross-link: Glycyl lysine isopeptide (Lys-Gly) (interchain with G-Cter in DncV). Cysteine 91 functions as the For E2-like domain in the catalytic mechanism. Residues lysine 305, lysine 387, and lysine 484 each participate in a glycyl lysine isopeptide (Lys-Gly) (interchain with G-Cter in DncV) cross-link. Residue cysteine 493 forms a Glycyl cysteine dithioester (Cys-Gly) (interchain with G-Cter in DncV) linkage. Residues cysteine 493, cysteine 496, and cysteine 513 each act as for E1-like domain in the active site. Cysteine 513 is covalently cross-linked (Glycyl cysteine dithioester (Cys-Gly) (interchain with G-Cter in DncV)). Residue lysine 523 forms a Glycyl lysine isopeptide (Lys-Gly) (interchain with G-Cter in DncV) linkage.

In the C-terminal section; belongs to the HesA/MoeB/ThiF family. In terms of assembly, a Cap2 dimer is bound on either side by a DncV monomer. In terms of processing, conjugated to DncV via 5 different Lys residues and 3 Cys residues.

Functionally, CD-NTase priming component of a CBASS antiviral system. CBASS (cyclic oligonucleotide-based antiphage signaling system) provides immunity against bacteriophages. The CD-NTase protein (DncV) synthesizes cyclic nucleotides in response to infection; these serve as specific second messenger signals. The signals activate a diverse range of effectors, leading to bacterial cell death and thus abortive phage infection. A type II-A(GA) CBASS system. Its function is as follows. Conjugates DncV to itself in vitro and to other cellular proteins in vivo; conjugation requires ATP. This primes DncV, upon phage infection CdnA activates and makes cyclic nucleotides. Protects E.coli against phage infection. When capV and dncV are introduced in E.coli MG1655 there is 1000-fold protection against phage P1; protection against other phage (T2, T4, T5, T6 and lambda-vir) requires the 2 subsequent genes. In another paper the capV-dncV-cap2-cap3 operon gives 10(4)-10(5)-fold protection against phages lambda, T2, T4 and T6, about 1000-fold protection against P1 and 10-fold protection against T5. This is ATP-dependent ubiquitin transferase-like protein Cap2 from Escherichia coli (strain TW11681).